The following is a 334-amino-acid chain: MKTERILGALYGQALGDAMGMPSELWPRSRVKAHFGWIDRFLPGPKENNAACYFNRAEFTDDTSMALCLADALLEREGKIDPDLIGRNILDWALRFDAFNKNVLGPTSKIALNAIRDGKPVAELENNGVTNGAAMRVSPLGCLLPARDVDSFIDDVALASSPTHKSDLAVAGAVVIAWAISRAIDGESWSAIVDSLPSIARHAQQKRITTFSASLAARLEIALKIVRNADGTESASEQLYQVVGAGTSTIESVPCAIALVELAQTDPNRCAVLCANLGGDTDTIGAMATAICGALHGVNAIDPALKAELDAVNQLDFNRYATALAKYRQQREAV.

It belongs to the ADP-ribosylglycohydrolase family.

This is an uncharacterized protein from Escherichia coli (strain K12).